The chain runs to 374 residues: Ribosomal RNA large subunit methyltransferase G (374 aa).

The protein belongs to the methyltransferase superfamily. RlmG family.

The protein localises to the cytoplasm. The enzyme catalyses guanosine(1835) in 23S rRNA + S-adenosyl-L-methionine = N(2)-methylguanosine(1835) in 23S rRNA + S-adenosyl-L-homocysteine + H(+). Functionally, specifically methylates the guanine in position 1835 (m2G1835) of 23S rRNA. The sequence is that of Ribosomal RNA large subunit methyltransferase G from Photobacterium profundum (strain SS9).